The sequence spans 816 residues: Sodium/hydrogen exchanger 1 (816 aa).

Over 1 to 98 (MLLWSAVRGL…FPVLGIDYTH (98 aa)) the chain is Extracellular. The span at 37 to 50 (LQLSPTDSTTPDSQ) shows a compositional bias: polar residues. Residues 37–79 (LQLSPTDSTTPDSQPSRERSIGDVTTAPPEVTPESRPVNRSVT) are disordered. Asn-75 carries an N-linked (GlcNAc...) asparagine glycan. The helical transmembrane segment at 99 to 121 (VRTPFEISLWILLACLMKIGFHV) threads the bilayer. At 122 to 130 (IPTISSIVP) the chain is on the cytoplasmic side. The chain crosses the membrane as a helical span at residues 131 to 148 (ESCLLIVVGLLVGGLIKG). At 149-158 (VGEKPPFLQS) the chain is on the extracellular side. The chain crosses the membrane as a helical span at residues 159 to 176 (EVFFLFLLPPIILDAGYF). The Cytoplasmic segment spans residues 177–186 (LPLRQFTENL). The chain crosses the membrane as a helical span at residues 187–215 (GTILIFAVVGTLWNAFFLGGLMYAVCLVG). The Extracellular segment spans residues 216 to 222 (GEQINNI). Residues 223-249 (GLLDNLLFGSIISAVDPVAVLAVFEEI) form a helical membrane-spanning segment. Over 250–252 (HIN) the chain is Cytoplasmic. Residues 253–283 (ELLHILVFGESLLNDAVTVVLYHLFEEFANY) traverse the membrane as a helical segment. Residues 284–287 (DHVG) lie on the Extracellular side of the membrane. The chain crosses the membrane as a helical span at residues 288–322 (IVDIVLGFLSFFVVALGGVFVGVVYGVIAAFTSRF). Residues 323–328 (TAHIRV) lie on the Cytoplasmic side of the membrane. The chain crosses the membrane as a helical span at residues 329-341 (IEPLFVFLYSYMA). Residues 342-350 (YLSAELFHL) are Extracellular-facing. Residues 351-371 (SGIMALIASGVVMRPYVEANI) traverse the membrane as a helical segment. Over 372 to 373 (SH) the chain is Cytoplasmic. Residues 374–404 (KSHTTIKYFLKMWSSVSETLIFIFLGVSTVA) form a helical membrane-spanning segment. Topologically, residues 405–410 (GSHHWN) are extracellular. A helical membrane pass occupies residues 411 to 438 (WTFVISTLLFCLIARVLGVLGLTWFINK). At 439-444 (FRIVKL) the chain is on the cytoplasmic side. The helical transmembrane segment at 445–469 (TPKDQFIIAYGGLRGAIAFSLGYLL) threads the bilayer. The Extracellular portion of the chain corresponds to 470 to 475 (DKKHFP). A helical transmembrane segment spans residues 476 to 505 (MCDLFLTAIITVIFFTVFVQGMTIRPLVDL). An interaction with TESC region spans residues 503–545 (VDLLAVKKKQETKRSINEEIHTQFLDHLLTGIEDICGHYGHHH). Over 506–816 (LAVKKKQETK…EGEPFIPKGQ (311 aa)) the chain is Cytoplasmic. Residues 509 to 516 (KKKQETKR) are PI(4,5)P2-binding region. Residues 515–545 (KRSINEEIHTQFLDHLLTGIEDICGHYGHHH) form an interaction with CHP2 region. A confers pH-dependent PI(4,5)P2 binding region spans residues 540–545 (HYGHHH). A PI(4,5)P2-binding region region spans residues 552-560 (RFNKKYVKK). Phosphoserine is present on residues Ser-599 and Ser-602. Residue Thr-603 is modified to Phosphothreonine. Residues Ser-605 and Ser-648 each carry the phosphoserine modification. Residues 633–816 (KILRNNLQKT…EGEPFIPKGQ (184 aa)) form an interaction with TESC region. The interaction with CALM1 stretch occupies residues 633–816 (KILRNNLQKT…EGEPFIPKGQ (184 aa)). The segment at 684–687 (LTVP) is interaction with PPP3CA. 3 positions are modified to phosphoserine: Ser-693, Ser-697, and Ser-703. The segment at 715–720 (PVITID) is interaction with PPP3CA. Ser-723, Ser-726, Ser-729, Ser-786, Ser-788, and Ser-797 each carry phosphoserine. The segment at 748–816 (PRVAEEAAEE…EGEPFIPKGQ (69 aa)) is disordered. Over residues 783–792 (PSDSPSSQRM) the composition is skewed to polar residues.

It belongs to the monovalent cation:proton antiporter 1 (CPA1) transporter (TC 2.A.36) family. As to quaternary structure, homodimer; dimerization is crucial for its function. Oligomer. Interacts with CALM in a calcium-dependent manner. Interacts with TESC. Interacts (via the juxtamembrane region of the cytoplasmic C-terminal domain) with CHP1; the interaction occurs at the plasma membrane in a calcium-dependent manner. Interacts with CHP2; the interaction occurs in a calcium-dependent manner. Interacts with EZR; regulates the cytoskeletal interactions of SLC9A1 and promotes stress fiber formation. In terms of processing, ubiquitinated, leading to its degradation by the proteasome. Ubiquitination is reduced by CHP1. O-glycosylated. Post-translationally, palmitoylated; may play a major role in SLC9A1 regulation. In terms of processing, phosphorylation at Ser-648 by AKT1 reduces SLC9A1 binding to CALM1. Kidney and intestine.

Its subcellular location is the cell membrane. It is found in the basolateral cell membrane. It carries out the reaction Na(+)(in) + H(+)(out) = Na(+)(out) + H(+)(in). The enzyme catalyses Li(+)(out) + H(+)(in) = Li(+)(in) + H(+)(out). The catalysed reaction is Li(+)(in) + Na(+)(out) = Li(+)(out) + Na(+)(in). Its activity is regulated as follows. Activated at acidic pHs. Inhibited by cariporide and eniporide. Phosphatidylinositol 4,5-bisphosphate (PI(4,5)P2) and phosphatidylinositol 3,4,5-trisphosphate (PI(3,4,5)P3) bind and differentially regulate SLC9A1 activity. Functionally, electroneutral Na(+) /H(+) antiporter that extrudes Na(+) in exchange for external protons driven by the inward sodium ion chemical gradient, protecting cells from acidification that occurs from metabolism. Exchanges intracellular H(+) ions for extracellular Na(+) in 1:1 stoichiometry. Plays a key role in maintening intracellular pH neutral and cell volume, and thus is important for cell growth, proliferation, migration and survival. In addition, can transport lithium Li(+) and functions also as a Na(+)/Li(+) antiporter. SLC9A1 also functions in membrane anchoring and organization of scaffolding complexes that coordinate signaling inputs. This Oryctolagus cuniculus (Rabbit) protein is Sodium/hydrogen exchanger 1 (SLC9A1).